Consider the following 159-residue polypeptide: Phosphopantetheine adenylyltransferase (159 aa).

A substrate-binding site is contributed by T10. ATP-binding positions include 10 to 11 (TF) and H18. Substrate is bound by residues K42, M74, and R88. ATP-binding positions include 89–91 (GLR), E99, and 124–130 (WSFISSS).

This sequence belongs to the bacterial CoaD family. In terms of assembly, homohexamer. Requires Mg(2+) as cofactor.

It is found in the cytoplasm. It carries out the reaction (R)-4'-phosphopantetheine + ATP + H(+) = 3'-dephospho-CoA + diphosphate. Its pathway is cofactor biosynthesis; coenzyme A biosynthesis; CoA from (R)-pantothenate: step 4/5. Its function is as follows. Reversibly transfers an adenylyl group from ATP to 4'-phosphopantetheine, yielding dephospho-CoA (dPCoA) and pyrophosphate. The sequence is that of Phosphopantetheine adenylyltransferase from Cronobacter sakazakii (strain ATCC BAA-894) (Enterobacter sakazakii).